The following is a 235-amino-acid chain: MGQKVHPHGIRLGIVKPWSSTWFANTQDFADNLEGDFKVRKFLNKELANASVSRITIERPAKSIRVTIHTARPGIVIGKKGEDVEKLRNAVSKIAGVPAQINIAEVKKPELDAKLVADSIASQLERRVMFRRAMKRAVQSAMRLGAKGIKVEVSGRLGGAEIARSEWYREGRVPLHTLRADIDYNTAEAHTTYGVIGVKVWIFKGEILGGMAAVAQSEQQPADKPKKAPRGKGRK.

Residues 39-107 form the KH type-2 domain; the sequence is VRKFLNKELA…PAQINIAEVK (69 aa). Residues 215 to 235 are disordered; sequence AQSEQQPADKPKKAPRGKGRK.

Belongs to the universal ribosomal protein uS3 family. Part of the 30S ribosomal subunit. Forms a tight complex with proteins S10 and S14.

In terms of biological role, binds the lower part of the 30S subunit head. Binds mRNA in the 70S ribosome, positioning it for translation. This is Small ribosomal subunit protein uS3 from Haemophilus influenzae (strain PittEE).